The primary structure comprises 391 residues: MIGTPYTEGARRAMLLGCGELGKEVAIELQRLGVEVIGVDRYANAPAMQVAHRSHVINMLDANALRAVIELEKPHLVIPEIEAIATQTLVDMEAEGVNIIPTARATKLTMDREGIRRLAAETLGLPTSPYFFCDTETEFNQAISEIGVPCVVKPVMSSSGKGQSVIRDIALSHKAWQYAQEGGRAGGGRVIVEGFIPFDYEITLLTISAVNGIHFCAPIGHRQEDGDYRESWQPQAMSDEVLAKSQAIASKVVEALGGYGLFGVELFVKGHEVYFSEVSPRPHDTGLVTLISQDLSEFALHVRAIQGLPIPNIHQHGPSASAVILAEGTSSNIRYQGIAAALEAVNTQLRLFAKPDIDGRRRLGVALARDIDIDSAVSKALDSASKVKVIF.

Residues glutamate 20–leucine 21 and glutamate 80 each bind N(1)-(5-phospho-beta-D-ribosyl)glycinamide. Residues arginine 112, lysine 153, serine 158–glutamine 163, glutamate 193–isoleucine 196, and glutamate 201 contribute to the ATP site. The 190-residue stretch at arginine 117–glutamine 306 folds into the ATP-grasp domain. Mg(2+) is bound by residues glutamate 265 and glutamate 277. N(1)-(5-phospho-beta-D-ribosyl)glycinamide-binding positions include aspartate 284, lysine 354, and arginine 361–arginine 362.

Belongs to the PurK/PurT family. Homodimer.

The catalysed reaction is N(1)-(5-phospho-beta-D-ribosyl)glycinamide + formate + ATP = N(2)-formyl-N(1)-(5-phospho-beta-D-ribosyl)glycinamide + ADP + phosphate + H(+). Its pathway is purine metabolism; IMP biosynthesis via de novo pathway; N(2)-formyl-N(1)-(5-phospho-D-ribosyl)glycinamide from N(1)-(5-phospho-D-ribosyl)glycinamide (formate route): step 1/1. Its function is as follows. Involved in the de novo purine biosynthesis. Catalyzes the transfer of formate to 5-phospho-ribosyl-glycinamide (GAR), producing 5-phospho-ribosyl-N-formylglycinamide (FGAR). Formate is provided by PurU via hydrolysis of 10-formyl-tetrahydrofolate. The chain is Formate-dependent phosphoribosylglycinamide formyltransferase from Shewanella baltica (strain OS185).